The chain runs to 484 residues: MERQVLRLRQAFRSGRSRPLRFRLQQLEALRRMVQEREKEILAAIAADLSKSELNAYSHEVITILGEIDFMLGNLPELASARPAKKNLLTMMDEAYVQPEPLGVVLIIGAWNYPFVLTMQPLVGAIAAGNAAIVKPSELSENTAKILAELLPQYLDQDLYAIVNGGIPETTELLKQRFDHILYTGNTAVGKIVMEAAAKHLTPVTLELGGKSPCYIDRDCDLDVACRRIAWGKYMNCGQTCIAPDYILCEASLQNQIVQKIKETVKDFYGENIKASPDYERIINLRHFKRLQSLLKGQKIAFGGEMDEATRYLAPTILTDVDPNSKVMQEEIFGPILPIVSVKNVDEAINFINDREKPLALYVFSRNNKLIKRVIDETSSGGVTGNDVIMHFTVNSLPFGGVGASGMGAYHGKYSFDTFSHQRPCLLKGLKGESVNKLRYPPNSESKVSWAKFFLLKQFNKGRLGMLLFVCLVAVAAVIVKDQL.

The Cytoplasmic segment spans residues 1–463 (MERQVLRLRQ…FLLKQFNKGR (463 aa)). An NAD(+)-binding site is contributed by 185–190 (GNTAVG). Active-site residues include E207 and C241. The residue at position 293 (S293) is a Phosphoserine. A helical transmembrane segment spans residues 464 to 484 (LGMLLFVCLVAVAAVIVKDQL). The short motif at 481-484 (KDQL) is the Prevents secretion from ER element.

It belongs to the aldehyde dehydrogenase family. Homodimer.

It localises to the membrane. It is found in the microsome membrane. The protein resides in the endoplasmic reticulum membrane. The enzyme catalyses an aldehyde + NAD(+) + H2O = a carboxylate + NADH + 2 H(+). It catalyses the reaction a fatty aldehyde + NAD(+) + H2O = a fatty acid + NADH + 2 H(+). The catalysed reaction is hexadecanoate + NADH + 2 H(+) = hexadecanal + NAD(+) + H2O. It carries out the reaction octanal + NAD(+) + H2O = octanoate + NADH + 2 H(+). The enzyme catalyses (2E)-hexadecenal + NAD(+) + H2O = (E)-hexadec-2-enoate + NADH + 2 H(+). It catalyses the reaction 22-oxodocosanoate + NAD(+) + H2O = docosanedioate + NADH + 2 H(+). The catalysed reaction is 2,6,10,14-tetramethylpentadecanal + NAD(+) + H2O = 2,6,10,14-tetramethylpentadecanoate + NADH + 2 H(+). It carries out the reaction octadecanal + NAD(+) + H2O = octadecanoate + NADH + 2 H(+). The enzyme catalyses dodecanoate + NADH + 2 H(+) = dodecanal + NAD(+) + H2O. It catalyses the reaction decanal + NAD(+) + H2O = decanoate + NADH + 2 H(+). The catalysed reaction is tetradecanal + NAD(+) + H2O = tetradecanoate + NADH + 2 H(+). It carries out the reaction heptanal + NAD(+) + H2O = heptanoate + NADH + 2 H(+). The enzyme catalyses (2E,6E)-farnesal + NAD(+) + H2O = (2E,6E)-farnesoate + NADH + 2 H(+). Functionally, catalyzes the oxidation of medium and long-chain aliphatic aldehydes to fatty acids. Active on a variety of saturated and unsaturated aliphatic aldehydes between 6 and 24 carbons in length. Responsible for conversion of the sphingosine 1-phosphate (S1P) degradation product hexadecenal to hexadecenoic acid. The polypeptide is Aldehyde dehydrogenase family 3 member A2 (Aldh3a2) (Mus musculus (Mouse)).